We begin with the raw amino-acid sequence, 445 residues long: 6-phosphogluconate dehydrogenase, decarboxylating (445 aa).

NADP(+)-binding positions include Ala-1–Gly-4, Asn-22–Ser-24, Val-63–Ala-65, and Asn-91. Residues Asn-91 and Ser-117–Gly-119 contribute to the substrate site. Catalysis depends on Lys-172, which acts as the Proton acceptor. Position 175–176 (His-175–Asn-176) interacts with substrate. Glu-179 serves as the catalytic Proton donor. Positions 180, 249, 276, 434, and 440 each coordinate substrate.

The protein belongs to the 6-phosphogluconate dehydrogenase family. As to quaternary structure, homodimer.

It carries out the reaction 6-phospho-D-gluconate + NADP(+) = D-ribulose 5-phosphate + CO2 + NADPH. The protein operates within carbohydrate degradation; pentose phosphate pathway; D-ribulose 5-phosphate from D-glucose 6-phosphate (oxidative stage): step 3/3. Its function is as follows. Catalyzes the oxidative decarboxylation of 6-phosphogluconate to ribulose 5-phosphate and CO(2), with concomitant reduction of NADP to NADPH. In Pseudescherichia vulneris (Escherichia vulneris), this protein is 6-phosphogluconate dehydrogenase, decarboxylating (gnd).